The primary structure comprises 351 residues: Alcohol dehydrogenase 2 (351 aa).

Residues Cys47, His70, Cys101, Cys104, Cys107, Cys115, and Cys157 each contribute to the Zn(2+) site. NAD(+) contacts are provided by residues 181–187, Asp205, Lys210, 272–274, and Arg344; these read GAGGGLG and VGL.

This sequence belongs to the zinc-containing alcohol dehydrogenase family. In terms of assembly, homotetramer. Requires Zn(2+) as cofactor.

It carries out the reaction a secondary alcohol + NAD(+) = a ketone + NADH + H(+). Versatile oxidoreductase that catalyzes the oxidation and reduction of a broad range of substrates. Preferentially oxidizes secondary alcohols. Has highest activity for racemic 2-octanol. Is also an efficient reductase for selected substrates. Substrate selectivity was found for medium chain lipophilic ketones. Has highest activities for 2-octanone, 2-nonanone and 2-decanone. The enzyme is (S)-selective in the reduction direction and produces exclusively the (S)-enantiomer. This is Alcohol dehydrogenase 2 (ADH2) from Yarrowia lipolytica (strain CLIB 122 / E 150) (Yeast).